The chain runs to 922 residues: Lacticin 481/lactococcin biosynthesis protein LcnDR2 (922 aa).

In terms of biological role, could be implicated in the processing or the export process of the lantibiotic lacticin 481/lactococcin DR. This chain is Lacticin 481/lactococcin biosynthesis protein LcnDR2 (lcnDR2), found in Lactococcus lactis subsp. lactis (Streptococcus lactis).